Here is a 442-residue protein sequence, read N- to C-terminus: tRNA-2-methylthio-N(6)-dimethylallyladenosine synthase (442 aa).

The 119-residue stretch at 2–120 folds into the MTTase N-terminal domain; that stretch reads KKVFIRTFGC…LPKMIVDKET (119 aa). [4Fe-4S] cluster-binding residues include C11, C49, C83, C157, C161, and C164. In terms of domain architecture, Radical SAM core spans 143–375; the sequence is RVEGGAAFVS…NEVIEAETAR (233 aa). A TRAM domain is found at 378-441; it reads QTMIGTVQRC…TFSLRGKVVE (64 aa).

It belongs to the methylthiotransferase family. MiaB subfamily. In terms of assembly, monomer. It depends on [4Fe-4S] cluster as a cofactor.

It is found in the cytoplasm. The catalysed reaction is N(6)-dimethylallyladenosine(37) in tRNA + (sulfur carrier)-SH + AH2 + 2 S-adenosyl-L-methionine = 2-methylsulfanyl-N(6)-dimethylallyladenosine(37) in tRNA + (sulfur carrier)-H + 5'-deoxyadenosine + L-methionine + A + S-adenosyl-L-homocysteine + 2 H(+). In terms of biological role, catalyzes the methylthiolation of N6-(dimethylallyl)adenosine (i(6)A), leading to the formation of 2-methylthio-N6-(dimethylallyl)adenosine (ms(2)i(6)A) at position 37 in tRNAs that read codons beginning with uridine. The sequence is that of tRNA-2-methylthio-N(6)-dimethylallyladenosine synthase from Neisseria meningitidis serogroup C / serotype 2a (strain ATCC 700532 / DSM 15464 / FAM18).